The sequence spans 419 residues: Multifunctional CCA protein (419 aa).

The ATP site is built by Gly-8 and Arg-11. CTP is bound by residues Gly-8 and Arg-11. Positions 21 and 23 each coordinate Mg(2+). ATP is bound by residues Arg-91, Arg-149, and Arg-152. Positions 91, 149, and 152 each coordinate CTP. The HD domain occupies 238-339; the sequence is CGVHLMMVID…VRLLERCDAF (102 aa).

It belongs to the tRNA nucleotidyltransferase/poly(A) polymerase family. Bacterial CCA-adding enzyme type 1 subfamily. Monomer. Can also form homodimers and oligomers. Mg(2+) serves as cofactor. Ni(2+) is required as a cofactor.

The catalysed reaction is a tRNA precursor + 2 CTP + ATP = a tRNA with a 3' CCA end + 3 diphosphate. It carries out the reaction a tRNA with a 3' CCA end + 2 CTP + ATP = a tRNA with a 3' CCACCA end + 3 diphosphate. Its function is as follows. Catalyzes the addition and repair of the essential 3'-terminal CCA sequence in tRNAs without using a nucleic acid template. Adds these three nucleotides in the order of C, C, and A to the tRNA nucleotide-73, using CTP and ATP as substrates and producing inorganic pyrophosphate. tRNA 3'-terminal CCA addition is required both for tRNA processing and repair. Also involved in tRNA surveillance by mediating tandem CCA addition to generate a CCACCA at the 3' terminus of unstable tRNAs. While stable tRNAs receive only 3'-terminal CCA, unstable tRNAs are marked with CCACCA and rapidly degraded. In Variovorax paradoxus (strain S110), this protein is Multifunctional CCA protein.